Reading from the N-terminus, the 416-residue chain is UDP-N-acetylglucosamine 1-carboxyvinyltransferase (416 aa).

Phosphoenolpyruvate is bound at residue 22–23; it reads KN. UDP-N-acetyl-alpha-D-glucosamine is bound at residue Arg91. The active-site Proton donor is Cys115. The residue at position 115 (Cys115) is a 2-(S-cysteinyl)pyruvic acid O-phosphothioketal. Positions 304 and 326 each coordinate UDP-N-acetyl-alpha-D-glucosamine.

It belongs to the EPSP synthase family. MurA subfamily.

It is found in the cytoplasm. The catalysed reaction is phosphoenolpyruvate + UDP-N-acetyl-alpha-D-glucosamine = UDP-N-acetyl-3-O-(1-carboxyvinyl)-alpha-D-glucosamine + phosphate. It functions in the pathway cell wall biogenesis; peptidoglycan biosynthesis. Cell wall formation. Adds enolpyruvyl to UDP-N-acetylglucosamine. This Thermodesulfovibrio yellowstonii (strain ATCC 51303 / DSM 11347 / YP87) protein is UDP-N-acetylglucosamine 1-carboxyvinyltransferase.